The following is a 118-amino-acid chain: MSQGLTAYRNVLRAANLAFKNDHFVLGQAKANIRKGFEDGRKLDPKDEDVKVRLEHINGVAYVLRTQVVQGQKHNPDEEKYQLNLHKDSEMGDNESIKSPPPMPTKGKKGKKVKCCSE.

Residues 70-118 form a disordered region; it reads QGQKHNPDEEKYQLNLHKDSEMGDNESIKSPPPMPTKGKKGKKVKCCSE. Over residues 74 to 90 the composition is skewed to basic and acidic residues; it reads HNPDEEKYQLNLHKDSE. Residues 106–118 are compositionally biased toward basic residues; sequence KGKKGKKVKCCSE.

This sequence belongs to the complex I LYR family. MZM1 subfamily. In terms of assembly, interacts with RIP1.

The protein localises to the mitochondrion matrix. In terms of biological role, assembly factor required for Rieske Fe-S protein RIP1 incorporation into the cytochrome b-c1 (CIII) complex. Functions as a chaperone, binding to this subunit within the mitochondrial matrix and stabilizing it prior to its translocation and insertion into the late CIII dimeric intermediate within the mitochondrial inner membrane. Modulates the mitochondrial matrix zinc pool. The sequence is that of Mitochondrial zinc maintenance protein 1, mitochondrial (MZM1) from Yarrowia lipolytica (strain CLIB 122 / E 150) (Yeast).